Consider the following 110-residue polypeptide: U12-hexatoxin-Hi1a (110 aa).

An N-terminal signal peptide occupies residues 1 to 18 (MRVALVFLVLSILAATHG). 3 disulfides stabilise this stretch: C72–C86, C79–C91, and C85–C104.

Expressed by the venom gland.

It is found in the secreted. Functionally, probable ion channel inhibitor. In Hadronyche infensa (Fraser island funnel-web spider), this protein is U12-hexatoxin-Hi1a.